The chain runs to 98 residues: MSLTYMNILVAFVISLTGLLMYRSHMMSSLLCLEGMMLSLFVMVTITILNTHLTLASMMPIILLVFAACEAALGLALLVMVSNTYGVDYVQNLNLLQC.

3 helical membrane-spanning segments follow: residues 1 to 21 (MSLT…GLLM), 29 to 49 (SLLC…ITIL), and 61 to 81 (IILL…LVMV).

Belongs to the complex I subunit 4L family. Core subunit of respiratory chain NADH dehydrogenase (Complex I) which is composed of 45 different subunits.

It is found in the mitochondrion inner membrane. It carries out the reaction a ubiquinone + NADH + 5 H(+)(in) = a ubiquinol + NAD(+) + 4 H(+)(out). Its function is as follows. Core subunit of the mitochondrial membrane respiratory chain NADH dehydrogenase (Complex I) which catalyzes electron transfer from NADH through the respiratory chain, using ubiquinone as an electron acceptor. Part of the enzyme membrane arm which is embedded in the lipid bilayer and involved in proton translocation. This is NADH-ubiquinone oxidoreductase chain 4L (MT-ND4L) from Mystacina tuberculata (New Zealand lesser short-tailed bat).